Here is a 1067-residue protein sequence, read N- to C-terminus: Dorsal-ventral patterning protein tolloid (1067 aa).

The first 36 residues, 1–36 (MKGMRLMPMKMKAKLVVLSVGALWMMMFFLVDYAEG), serve as a signal peptide directing secretion. Positions 37–136 (RRLSQLPESE…NGQPIQRRRR (100 aa)) are excised as a propeptide. A Peptidase M12A domain is found at 136–338 (RAVTVRKERT…VQANLLYKCA (203 aa)). Residue Asn176 is glycosylated (N-linked (GlcNAc...) asparagine). 5 disulfides stabilise this stretch: Cys179–Cys337, Cys201–Cys223, Cys203–Cys204, Cys340–Cys390, and Cys417–Cys439. His231 is a binding site for Zn(2+). Residue Glu232 is part of the active site. Zn(2+)-binding residues include His235 and His241. 2 consecutive short sequence motifs (cell attachment site) follow at residues 245 to 247 (RGD) and 325 to 327 (RGD). 2 consecutive CUB domains span residues 340 to 477 (CGRT…FEVV) and 478 to 591 (CGGD…LMLD). N-linked (GlcNAc...) asparagine glycosylation occurs at Asn441. 6 disulfides stabilise this stretch: Cys478–Cys505, Cys532–Cys554, Cys595–Cys606, Cys602–Cys615, Cys617–Cys630, and Cys634–Cys662. A glycan (N-linked (GlcNAc...) asparagine) is linked at Asn543. Residues 591–631 (DVDECKFTDHGCQHLCINTLGSYQCGCRAGYELQANGKTCE) enclose the EGF-like 1; calcium-binding domain. One can recognise a CUB 3 domain in the interval 634–753 (CGGVVDATKS…SGFVAKFVID (120 aa)). Asn644 and Asn677 each carry an N-linked (GlcNAc...) asparagine glycan. Intrachain disulfides connect Cys693/Cys716, Cys757/Cys768, Cys764/Cys777, Cys779/Cys792, Cys797/Cys823, Cys850/Cys872, Cys910/Cys940, and Cys967/Cys989. One can recognise an EGF-like 2; calcium-binding domain in the interval 753 to 793 (DVDECSMNNGGCQHRCRNTFGSYQCSCRNGYTLAENGHNCT). The N-linked (GlcNAc...) asparagine glycan is linked to Asn791. 2 consecutive CUB domains span residues 797–909 (CKFE…FVSE) and 910–1026 (CGGY…FMAV). Residues Asn864 and Asn918 are each glycosylated (N-linked (GlcNAc...) asparagine).

The cofactor is Zn(2+).

In terms of biological role, metalloprotease which cleaves TGF-beta family ligands daw, Actbeta and myo in vitro. Cleavage of daw enhances its signaling activity. Cleaves dorsal-ventral patterning protein sog. Processes sog more efficiently than metalloprotease tld which also cleaves sog. Required for normal dorsal development. TLD may interact physically with DPP-C protein. The polypeptide is Dorsal-ventral patterning protein tolloid (tld) (Drosophila melanogaster (Fruit fly)).